Consider the following 132-residue polypeptide: Global transcriptional regulator Spx (132 aa).

Cys10 and Cys13 are disulfide-bonded.

Belongs to the ArsC family. Spx subfamily. In terms of assembly, interacts with the C-terminal domain of the alpha subunit of the RNAP.

It localises to the cytoplasm. Its function is as follows. Global transcriptional regulator that plays a key role in stress response and exerts either positive or negative regulation of genes. Acts by interacting with the C-terminal domain of the alpha subunit of the RNA polymerase (RNAP). This interaction can enhance binding of RNAP to the promoter region of target genes and stimulate their transcription, or block interaction of RNAP with activator. The polypeptide is Global transcriptional regulator Spx (Lactiplantibacillus plantarum (strain ATCC BAA-793 / NCIMB 8826 / WCFS1) (Lactobacillus plantarum)).